We begin with the raw amino-acid sequence, 205 residues long: ATP phosphoribosyltransferase (205 aa).

The protein belongs to the ATP phosphoribosyltransferase family. Short subfamily. Heteromultimer composed of HisG and HisZ subunits.

It localises to the cytoplasm. The catalysed reaction is 1-(5-phospho-beta-D-ribosyl)-ATP + diphosphate = 5-phospho-alpha-D-ribose 1-diphosphate + ATP. Its pathway is amino-acid biosynthesis; L-histidine biosynthesis; L-histidine from 5-phospho-alpha-D-ribose 1-diphosphate: step 1/9. In terms of biological role, catalyzes the condensation of ATP and 5-phosphoribose 1-diphosphate to form N'-(5'-phosphoribosyl)-ATP (PR-ATP). Has a crucial role in the pathway because the rate of histidine biosynthesis seems to be controlled primarily by regulation of HisG enzymatic activity. The polypeptide is ATP phosphoribosyltransferase (Vesicomyosocius okutanii subsp. Calyptogena okutanii (strain HA)).